We begin with the raw amino-acid sequence, 417 residues long: Paired box protein Pax-2 (417 aa).

Residues 16-142 constitute a DNA-binding region (paired); the sequence is GHGGVNQLGG…SSINRIIRTK (127 aa). The PAI subdomain stretch occupies residues 19–75; the sequence is GVNQLGGVFVNGRPLPDVVRQRIVELAHQGVRPCDISRQLRVSHGCVSKILGRYYET. Residues 94-142 form an RED subdomain region; sequence KVVDKIAEYKRQNPTMFAWEIRDRLLAEGICDNDTVPSVSSINRIIRTK. T226 carries the post-translational modification Phosphothreonine. The interval 304-325 is disordered; the sequence is KSSLSASTNPELGSNVSGTQTY. The segment covering 305-325 has biased composition (polar residues); it reads SSLSASTNPELGSNVSGTQTY.

Interacts with ELGN3; the interaction targets PAX2 for destruction. Interacts with TLE4. As to expression, expressed in primitive cells of the kidney, ureter, eye, ear and central nervous system.

Its subcellular location is the nucleus. Its function is as follows. Transcription factor that may have a role in kidney cell differentiation. Has a critical role in the development of the urogenital tract, the eyes, and the CNS. In Homo sapiens (Human), this protein is Paired box protein Pax-2 (PAX2).